The primary structure comprises 66 residues: uncharacterized protein (66 aa).

This is an uncharacterized protein from Saccharomyces cerevisiae (strain ATCC 204508 / S288c) (Baker's yeast).